Here is a 191-residue protein sequence, read N- to C-terminus: Transmembrane protein 17B (191 aa).

4 helical membrane passes run methionine 50–leucine 70, phenylalanine 83–glycine 103, leucine 115–phenylalanine 135, and glycine 147–leucine 167.

This sequence belongs to the TMEM17 family. Part of the tectonic-like complex (also named B9 complex).

The protein resides in the cell projection. It localises to the cilium membrane. Transmembrane component of the tectonic-like complex, a complex localized at the transition zone of primary cilia and acting as a barrier that prevents diffusion of transmembrane proteins between the cilia and plasma membranes. Required for ciliogenesis and sonic hedgehog/SHH signaling. The chain is Transmembrane protein 17B (Tmem17b) from Danio rerio (Zebrafish).